The primary structure comprises 567 residues: Hexose transporter HXT11 (567 aa).

Positions 1–22 are enriched in polar residues; that stretch reads MSGVNNTSANELSTTMSNSNSA. The disordered stretch occupies residues 1-45; the sequence is MSGVNNTSANELSTTMSNSNSAVGAPSVKTEHGDSKNSLNLDANE. Over 1-56 the chain is Cytoplasmic; that stretch reads MSGVNNTSANELSTTMSNSNSAVGAPSVKTEHGDSKNSLNLDANEPPIDLPQKPLS. A helical transmembrane segment spans residues 57-77; the sequence is AYTTVAILCLMIAFGGFIFGW. The Extracellular portion of the chain corresponds to 78–112; the sequence is DTGTISGFVNLSDFIRRFGQKNDKGTYYLSKVRMG. N-linked (GlcNAc...) asparagine glycosylation is present at N87. The helical transmembrane segment at 113-133 threads the bilayer; the sequence is LIVSIFNIGCAIGGIVLSKVG. Over 134–139 the chain is Cytoplasmic; sequence DIYGRR. Residues 140–160 traverse the membrane as a helical segment; the sequence is IGLITVTAIYVVGILIQITSI. The Extracellular portion of the chain corresponds to 161–170; that stretch reads NKWYQYFIGR. Residues 171–191 traverse the membrane as a helical segment; it reads IISGLGVGGIAVLSPMLISEV. At 192–197 the chain is on the cytoplasmic side; sequence APKHIR. A helical transmembrane segment spans residues 198-218; the sequence is GTLVQLYQLMGTMGIFLGYCT. Topologically, residues 219–232 are extracellular; the sequence is NYGTKNYHNATQWR. The N-linked (GlcNAc...) asparagine glycan is linked to N227. The chain crosses the membrane as a helical span at residues 233 to 253; it reads VGLGLCFAWATFMVSGMMFVP. Residues 254 to 336 are Cytoplasmic-facing; the sequence is ESPRYLIEVG…IQSLQQLTGD (83 aa). The helical transmembrane segment at 337–353 threads the bilayer; sequence NYFFYYGTTIFKSVGLK. Residues 354 to 359 lie on the Extracellular side of the membrane; sequence DSFQTS. Residues 360 to 377 form a helical membrane-spanning segment; it reads IIIGVVNFFSSFIAVYTI. Residues 378–384 are Cytoplasmic-facing; sequence ERFGRRT. The chain crosses the membrane as a helical span at residues 385-405; it reads CLLWGAASMLCCFAVFASVGV. The Extracellular segment spans residues 406 to 429; that stretch reads TKLWPQGSSHQDITSQGAGNCMIV. Residues 430 to 450 traverse the membrane as a helical segment; it reads FTMFFIFSFATTWAGGCYVIV. Topologically, residues 451 to 467 are cytoplasmic; it reads SETFPLRVKSRGMAIAT. The chain crosses the membrane as a helical span at residues 468–488; it reads AANWMWGFLISFFTPFITGAI. A topological domain (extracellular) is located at residue N489. Residues 490 to 510 traverse the membrane as a helical segment; sequence FYYGYVFLGCLVFAYFYVFFF. At 511–567 the chain is on the cytoplasmic side; it reads VPETKGLTLEEVNTMWLEGVPAWKSASWVPPERRTADYDADAIDHDNRPIYKRFFSS.

The protein belongs to the major facilitator superfamily. Sugar transporter (TC 2.A.1.1) family.

The protein resides in the membrane. Its function is as follows. Probable glucose transporter. The protein is Hexose transporter HXT11 (HXT11) of Saccharomyces cerevisiae (strain ATCC 204508 / S288c) (Baker's yeast).